The sequence spans 121 residues: Group 1 truncated hemoglobin (121 aa).

Met1 is subject to N-acetylmethionine. Residue His73 participates in heme binding.

It belongs to the truncated hemoglobin family. Group I subfamily. Monomer. It depends on heme as a cofactor.

In Tetrahymena pyriformis, this protein is Group 1 truncated hemoglobin.